Consider the following 904-residue polypeptide: Envelope glycoprotein B (904 aa).

The N-terminal stretch at 1 to 30 (MRQGAPARGRRWFVVWALLGLTLGVLVASA) is a signal peptide. A compositionally biased stretch (low complexity) spans 31–52 (APSSPGTPGVAAATQAANGGPA). The segment at 31 to 88 (APSSPGTPGVAAATQAANGGPATPAPPAPGAPPTGDPKPKKNRKPKPPKPPRPAGDNA) is disordered. The Virion surface segment spans residues 31–774 (APSSPGTPGV…SGVSSFMSNP (744 aa)). Residues 53 to 66 (TPAPPAPGAPPTGD) are compositionally biased toward pro residues. A compositionally biased stretch (basic residues) spans 70–79 (KKNRKPKPPK). Residues asparagine 87 and asparagine 141 are each glycosylated (N-linked (GlcNAc...) asparagine; by host). 5 disulfides stabilise this stretch: cysteine 116–cysteine 573, cysteine 133–cysteine 529, cysteine 207–cysteine 271, cysteine 364–cysteine 412, and cysteine 596–cysteine 633. 2 involved in fusion and/or binding to host membrane regions span residues 173–179 (VWFGHRY) and 258–265 (RVEAFHRY). Residues asparagine 398 and asparagine 430 are each glycosylated (N-linked (GlcNAc...) asparagine; by host). The segment at 470–492 (REQSRKPPNPTPPPPGASANASV) is disordered. A compositionally biased stretch (pro residues) spans 476-485 (PPNPTPPPPG). An N-linked (GlcNAc...) asparagine; by host glycan is attached at asparagine 489. Asparagine 674 carries an N-linked (GlcNAc...) asparagine; by host glycan. The hydrophobic membrane proximal region stretch occupies residues 719–772 (IDTVIHADANAAMFAGLGAFFEGMGDLGRAVGKVVMGIVGGVVSAVSGVSSFMS). Residues 775–795 (FGALAVGLLVLAGLAAAFFAF) traverse the membrane as a helical segment. Topologically, residues 796–904 (RYVMRLQSNP…KDGDADEDDL (109 aa)) are intravirion. The Golgi targeting motif lies at 849–852 (YMAL). Positions 883 to 904 (KRRNTNYTQVPNKDGDADEDDL) are disordered. Residues 889 to 892 (YTQV) carry the Internalization motif motif.

Belongs to the herpesviridae glycoprotein B family. Homotrimer; disulfide-linked. Interacts with host receptor MYH9/NMMHC-IIA. Interacts with host receptor MYH10/NMMHC-IIB. Binds to heparan sulfate proteoglycans. Interacts with gH/gL heterodimer. Interacts with host DEFA1, DEFA2 and DEFA3; these interactions inhibit viral infection. In terms of processing, the cytoplasmic tail is phosphorylated by the viral kinase US3. Phosphorylation may be linked to a down-regulation of gB expression on cell surface. Ubiquitinated.

It is found in the virion membrane. It localises to the host cell membrane. The protein localises to the host endosome membrane. The protein resides in the host Golgi apparatus membrane. In terms of biological role, envelope glycoprotein that forms spikes at the surface of virion envelope and binds to the host cell entry receptors MYH9/NMMHC-IIA and MYH10/NMMHC-IIB, promoting the virus entry into host cells. Essential for the initial attachment to heparan sulfate moieties of the host cell surface proteoglycans. Involved in fusion of viral and cellular membranes leading to virus entry into the host cell: following initial binding to its host cell entry receptors, membrane fusion is mediated by the fusion machinery composed at least of gB and the heterodimer gH/gL. May be involved in the fusion between the virion envelope and the outer nuclear membrane during virion egress. Also plays a role, together with gK, in virus-induced cell-to-cell fusion (syncytia formation). The sequence is that of Envelope glycoprotein B from Homo sapiens (Human).